A 1070-amino-acid polypeptide reads, in one-letter code: DNA-directed RNA polymerase subunit beta (1070 aa).

Belongs to the RNA polymerase beta chain family. In terms of assembly, in plastids the minimal PEP RNA polymerase catalytic core is composed of four subunits: alpha, beta, beta', and beta''. When a (nuclear-encoded) sigma factor is associated with the core the holoenzyme is formed, which can initiate transcription.

The protein localises to the plastid. It localises to the chloroplast. It catalyses the reaction RNA(n) + a ribonucleoside 5'-triphosphate = RNA(n+1) + diphosphate. In terms of biological role, DNA-dependent RNA polymerase catalyzes the transcription of DNA into RNA using the four ribonucleoside triphosphates as substrates. The chain is DNA-directed RNA polymerase subunit beta from Silene latifolia (White campion).